The primary structure comprises 147 residues: D-aminoacyl-tRNA deacylase (147 aa).

Residues 137–138 carry the Gly-cisPro motif, important for rejection of L-amino acids motif; it reads GP.

It belongs to the DTD family. As to quaternary structure, homodimer.

The protein resides in the cytoplasm. It carries out the reaction glycyl-tRNA(Ala) + H2O = tRNA(Ala) + glycine + H(+). The enzyme catalyses a D-aminoacyl-tRNA + H2O = a tRNA + a D-alpha-amino acid + H(+). In terms of biological role, an aminoacyl-tRNA editing enzyme that deacylates mischarged D-aminoacyl-tRNAs. Also deacylates mischarged glycyl-tRNA(Ala), protecting cells against glycine mischarging by AlaRS. Acts via tRNA-based rather than protein-based catalysis; rejects L-amino acids rather than detecting D-amino acids in the active site. By recycling D-aminoacyl-tRNA to D-amino acids and free tRNA molecules, this enzyme counteracts the toxicity associated with the formation of D-aminoacyl-tRNA entities in vivo and helps enforce protein L-homochirality. The polypeptide is D-aminoacyl-tRNA deacylase (Acinetobacter baumannii (strain ACICU)).